Consider the following 144-residue polypeptide: Small polypeptide DEVIL 18 (144 aa).

The span at serine 30 to serine 58 shows a compositional bias: low complexity. The disordered stretch occupies residues serine 30–aspartate 89. Residues proline 42–serine 58 traverse the membrane as a helical segment. The span at alanine 68–threonine 84 shows a compositional bias: polar residues. The tract at residues serine 108 to lysine 139 is required for DVL/RTFL small polypeptide activity.

It belongs to the DVL/RTFL small polypeptides family.

The protein localises to the cell membrane. Functionally, small polypeptide acting as a regulatory molecule which coordinates cellular responses required for differentiation, growth and development, probably by restricting polar cell proliferation in lateral organs and coordinating socket cell recruitment and differentiation at trichome sites. The chain is Small polypeptide DEVIL 18 from Arabidopsis thaliana (Mouse-ear cress).